The following is a 56-amino-acid chain: Large ribosomal subunit protein bL32 (56 aa).

The span at 1 to 16 (MAVQKNKKSRSKRGMR) shows a compositional bias: basic residues. Residues 1–36 (MAVQKNKKSRSKRGMRRSHDSLSTPQLSVDSTSGEL) are disordered. Residues 21–34 (SLSTPQLSVDSTSG) are compositionally biased toward polar residues.

The protein belongs to the bacterial ribosomal protein bL32 family.

This is Large ribosomal subunit protein bL32 from Shewanella sediminis (strain HAW-EB3).